The sequence spans 231 residues: Casein kinase II subunit beta (231 aa).

It belongs to the casein kinase 2 subunit beta family. As to quaternary structure, tetramer composed of two alpha chains, one beta chain and one beta' chain. Phosphorylated by alpha subunit.

Functionally, regulatory subunit of casein kinase II/CK2. As part of the kinase complex regulates the basal catalytic activity of the alpha subunit a constitutively active serine/threonine-protein kinase that phosphorylates a large number of substrates containing acidic residues C-terminal to the phosphorylated serine or threonine. This is Casein kinase II subunit beta from Schizosaccharomyces pombe (strain 972 / ATCC 24843) (Fission yeast).